A 485-amino-acid chain; its full sequence is NADH-quinone oxidoreductase subunit N (485 aa).

Helical transmembrane passes span 8 to 28 (LIALSPLLIVGLTVVVVMLCI), 35 to 55 (FVNATMTVIGLNIALLSLYFV), 75 to 95 (FYTGLVLLASLATSTFAYPWL), 105 to 125 (FYLLVLIAALGGILLSSANHL), 127 to 147 (SLFIGIELLSLPLFGLVGYAF), 159 to 179 (YMLLSAAASSFLLFGMALIYA), 203 to 223 (LLAGLGMMIVGLGFKLSLVPF), 235 to 255 (PAPVSTFLATAGKIAVFGAVM), 271 to 291 (IVLSIIAFASIMFGNVMAVSQ), 297 to 317 (LLGYSSIAHLGYLLVALIAVQ), 326 to 346 (VGVYLVGYLFSSLGAFGVVSL), 374 to 394 (AVMTVMMLSLAGIPMTLGFFG), 407 to 426 (LWWLTGAVVLGSAIGLYYYL), and 449 to 469 (ALTAGGVVVLISSIVVLFFGL).

The protein belongs to the complex I subunit 2 family. In terms of assembly, NDH-1 is composed of 13 different subunits. Subunits NuoA, H, J, K, L, M, N constitute the membrane sector of the complex.

Its subcellular location is the cell inner membrane. The enzyme catalyses a quinone + NADH + 5 H(+)(in) = a quinol + NAD(+) + 4 H(+)(out). NDH-1 shuttles electrons from NADH, via FMN and iron-sulfur (Fe-S) centers, to quinones in the respiratory chain. The immediate electron acceptor for the enzyme in this species is believed to be ubiquinone. Couples the redox reaction to proton translocation (for every two electrons transferred, four hydrogen ions are translocated across the cytoplasmic membrane), and thus conserves the redox energy in a proton gradient. The polypeptide is NADH-quinone oxidoreductase subunit N (Pectobacterium atrosepticum (strain SCRI 1043 / ATCC BAA-672) (Erwinia carotovora subsp. atroseptica)).